The sequence spans 437 residues: Dolichyl-diphosphooligosaccharide--protein glycosyltransferase 48 kDa subunit (437 aa).

Residues 1-24 form the signal peptide; it reads MASLRVSVLLVAASCLLLGSGLRA. Residues 25 to 407 are Lumenal-facing; it reads GPRTLVLLEN…QYERFIPSAY (383 aa). A helical membrane pass occupies residues 408–428; the sequence is PYYASAFSVMFGLFIFSIVFL. The Cytoplasmic portion of the chain corresponds to 429-437; the sequence is HMKEKEKSD.

Belongs to the DDOST 48 kDa subunit family. Component of the oligosaccharyltransferase (OST) complex.

The protein localises to the endoplasmic reticulum membrane. The protein operates within protein modification; protein glycosylation. Its function is as follows. Subunit of the oligosaccharyl transferase (OST) complex that catalyzes the initial transfer of a defined glycan (Glc(3)Man(9)GlcNAc(2) in eukaryotes) from the lipid carrier dolichol-pyrophosphate to an asparagine residue within an Asn-X-Ser/Thr consensus motif in nascent polypeptide chains, the first step in protein N-glycosylation. N-glycosylation occurs cotranslationally and the complex associates with the Sec61 complex at the channel-forming translocon complex that mediates protein translocation across the endoplasmic reticulum (ER). All subunits are required for a maximal enzyme activity. Required for the assembly of both SST3A- and SS3B-containing OST complexes. This is Dolichyl-diphosphooligosaccharide--protein glycosyltransferase 48 kDa subunit from Xenopus tropicalis (Western clawed frog).